Here is a 1212-residue protein sequence, read N- to C-terminus: DNA-directed RNA polymerase subunit beta (1212 aa).

Residues 1176–1195 (QQEKKKLAEEAAKKDDKSAE) are compositionally biased toward basic and acidic residues. The segment at 1176 to 1212 (QQEKKKLAEEAAKKDDKSAEPVDQSDSSTSSDDKVSK) is disordered.

Belongs to the RNA polymerase beta chain family. In terms of assembly, the RNAP catalytic core consists of 2 alpha, 1 beta, 1 beta' and 1 omega subunit. When a sigma factor is associated with the core the holoenzyme is formed, which can initiate transcription.

The catalysed reaction is RNA(n) + a ribonucleoside 5'-triphosphate = RNA(n+1) + diphosphate. DNA-dependent RNA polymerase catalyzes the transcription of DNA into RNA using the four ribonucleoside triphosphates as substrates. In Lactobacillus gasseri (strain ATCC 33323 / DSM 20243 / BCRC 14619 / CIP 102991 / JCM 1131 / KCTC 3163 / NCIMB 11718 / NCTC 13722 / AM63), this protein is DNA-directed RNA polymerase subunit beta.